The sequence spans 132 residues: Small ribosomal subunit protein uS8 (132 aa).

It belongs to the universal ribosomal protein uS8 family. In terms of assembly, part of the 30S ribosomal subunit. Contacts proteins S5 and S12.

One of the primary rRNA binding proteins, it binds directly to 16S rRNA central domain where it helps coordinate assembly of the platform of the 30S subunit. In Baumannia cicadellinicola subsp. Homalodisca coagulata, this protein is Small ribosomal subunit protein uS8.